Here is a 402-residue protein sequence, read N- to C-terminus: mRNA cap guanine-N(7) methyltransferase (402 aa).

Residues 1 to 11 show a composition bias toward basic and acidic residues; it reads MDHVLNPEEKV. Positions 1–75 are disordered; it reads MDHVLNPEEK…PRLEEGHGSL (75 aa). The span at 35–50 shows a compositional bias: polar residues; that stretch reads PKLSASEKSLPGNTKS. The span at 55–72 shows a compositional bias: basic and acidic residues; the sequence is KAAEPDSPPKRPRLEEGH. An mRNA cap 0 methyltransferase domain is found at 94–401; it reads SRIFHLRNFN…IYLLFAFEKQ (308 aa). Position 103 to 104 (103 to 104) interacts with mRNA; that stretch reads NN. S-adenosyl-L-methionine is bound by residues K107, G131, D153, D187, Q210, and Y215.

It belongs to the class I-like SAM-binding methyltransferase superfamily. mRNA cap 0 methyltransferase family.

It is found in the nucleus. It catalyses the reaction a 5'-end (5'-triphosphoguanosine)-ribonucleoside in mRNA + S-adenosyl-L-methionine = a 5'-end (N(7)-methyl 5'-triphosphoguanosine)-ribonucleoside in mRNA + S-adenosyl-L-homocysteine. Catalytic subunit of the mRNA-capping methyltransferase RNMT:RAMAC complex that methylates the N7 position of the added guanosine to the 5'-cap structure of mRNAs. Binds RNA containing 5'-terminal GpppC. This Xenopus laevis (African clawed frog) protein is mRNA cap guanine-N(7) methyltransferase (rnmt).